The following is a 185-amino-acid chain: Threonylcarbamoyl-AMP synthase (185 aa).

The 179-residue stretch at 7–185 (AAQRRAARAH…IDFASGRVLR (179 aa)) folds into the YrdC-like domain.

Belongs to the SUA5 family. TsaC subfamily.

The protein resides in the cytoplasm. The catalysed reaction is L-threonine + hydrogencarbonate + ATP = L-threonylcarbamoyladenylate + diphosphate + H2O. Required for the formation of a threonylcarbamoyl group on adenosine at position 37 (t(6)A37) in tRNAs that read codons beginning with adenine. Catalyzes the conversion of L-threonine, HCO(3)(-)/CO(2) and ATP to give threonylcarbamoyl-AMP (TC-AMP) as the acyladenylate intermediate, with the release of diphosphate. This Laribacter hongkongensis (strain HLHK9) protein is Threonylcarbamoyl-AMP synthase.